The chain runs to 311 residues: Mediator of RNA polymerase II transcription subunit 27-B (311 aa).

The protein belongs to the Mediator complex subunit 27 family. Component of the Mediator complex.

It localises to the nucleus. Functionally, component of the Mediator complex, a coactivator involved in the regulated transcription of nearly all RNA polymerase II-dependent genes. Mediator functions as a bridge to convey information from gene-specific regulatory proteins to the basal RNA polymerase II transcription machinery. Mediator is recruited to promoters by direct interactions with regulatory proteins and serves as a scaffold for the assembly of a functional preinitiation complex with RNA polymerase II and the general transcription factors. This is Mediator of RNA polymerase II transcription subunit 27-B (med27-b) from Xenopus laevis (African clawed frog).